A 358-amino-acid polypeptide reads, in one-letter code: 2-oxoisovalerate dehydrogenase subunit beta 2, mitochondrial (358 aa).

The transit peptide at 1–16 (MAAALVRRFCRGSSFP) directs the protein to the mitochondrion. Residue tyrosine 119 coordinates thiamine diphosphate. K(+) contacts are provided by glycine 145, leucine 147, threonine 148, aspartate 198, and asparagine 200.

Heterotetramer of alpha and beta chains. It depends on thiamine diphosphate as a cofactor. Expressed in the non-photosynthetic organs such as siliques, flowers and roots.

The protein localises to the mitochondrion matrix. The catalysed reaction is N(6)-[(R)-lipoyl]-L-lysyl-[protein] + 3-methyl-2-oxobutanoate + H(+) = N(6)-[(R)-S(8)-2-methylpropanoyldihydrolipoyl]-L-lysyl-[protein] + CO2. The branched-chain alpha-keto dehydrogenase complex catalyzes the overall conversion of alpha-keto acids to acyl-CoA and CO(2). It contains multiple copies of three enzymatic components: branched-chain alpha-keto acid decarboxylase (E1), lipoamide acyltransferase (E2) and lipoamide dehydrogenase (E3). Required during sugar starvation and acts under the control of a sugar-sensing mechanism involving Ser/Thr kinases and phosphatases. This Arabidopsis thaliana (Mouse-ear cress) protein is 2-oxoisovalerate dehydrogenase subunit beta 2, mitochondrial (DIN4).